The sequence spans 673 residues: Polygalacturonate 4-alpha-galacturonosyltransferase (673 aa).

At 1-22 (MALKRGLSGVNRIRGSGGGSRS) the chain is on the cytoplasmic side. Residues 23–43 (VLVLLIFFCVFAPLCFFVGRG) traverse the membrane as a helical; Signal-anchor for type II membrane protein segment. Residues 44–673 (VYIDSSNDYS…PYLRRCNLHE (630 aa)) are Lumenal-facing. An N-linked (GlcNAc...) asparagine glycan is attached at Asn-103. The tract at residues 112–136 (GVDPSFRHSENPATPDVKSNNLNEK) is disordered. N-linked (GlcNAc...) asparagine glycans are attached at residues Asn-382, Asn-434, Asn-538, and Asn-585.

It belongs to the glycosyltransferase 8 family. Expressed in seedlings, inflorescences, flowers, siliques, pollen, roots, stems and leaves.

It localises to the golgi apparatus membrane. The enzyme catalyses [(1-&gt;4)-alpha-D-galacturonosyl](n) + UDP-alpha-D-galacturonate = [(1-&gt;4)-alpha-D-galacturonosyl](n+1) + UDP + H(+). The protein operates within glycan metabolism; pectin biosynthesis. Involved in pectin biosynthesis. Catalyzes the transfer of galacturonic acid from uridine 5'-diphosphogalacturonic acid onto the pectic polysaccharide homogalacturonan. This is Polygalacturonate 4-alpha-galacturonosyltransferase (GAUT1) from Arabidopsis thaliana (Mouse-ear cress).